A 241-amino-acid polypeptide reads, in one-letter code: MQNNNDILKAQSPAALAEEYIVKSIWQDVFPAGSNLPSERDLADKIGVTRTTLREVLQRLARDGWLTIQHGKPTKVNNIWDAAGPNIIETLIALDMQSAPLIIDNMLSLRSKMSESYIYEAVKNSPQKSTALFAELEQLQNTAQDYTEFDYQLFRQFTVVANKPFYRLIFNSLKGVYQRIGLLFFKEKTHRELTKQFYLEMQQICLEGNADAVVDCIRKHNLRSSTYWKAILERLPQNLSD.

An HTH gntR-type domain is found at 11–79 (QSPAALAEEY…HGKPTKVNNI (69 aa)). A DNA-binding region (H-T-H motif) is located at residues 39–58 (ERDLADKIGVTRTTLREVLQ).

As to quaternary structure, homodimer.

Its subcellular location is the cytoplasm. Multifunctional regulator of fatty acid metabolism. The chain is Fatty acid metabolism regulator protein from Haemophilus influenzae (strain PittEE).